The primary structure comprises 415 residues: Mannosylglycerate hydrolase (415 aa).

Substrate-binding positions include tyrosine 23, 27–30 (WLWD), tyrosine 76, glutamine 98, and glycine 158. Aspartate 160 acts as the Proton donor in catalysis. Substrate contacts are provided by residues arginine 193 and 344–345 (YW). The active-site Proton acceptor is the glutamate 388.

Belongs to the glycosyl hydrolase 63 family. In terms of assembly, homotetramer in solution.

It catalyses the reaction (2R)-2-O-(alpha-D-mannosyl)-glycerate + H2O = D-mannose + (R)-glycerate. The catalysed reaction is (2R)-2-O-(alpha-D-glucopyranosyl)-glycerate + H2O = (R)-glycerate + D-glucose. Activity is not stimulated by divalent cations and not affected in the presence of EDTA. Functionally, hydrolase that catalyzes the hydrolysis of mannosylglycerate (MG), a solute produced in response to osmotic stress in thermophiles, into mannose and glycerate. Can also hydrolyze glucosylglycerate (GG) to glucose and glycerate, with similar catalytic efficiency. Is highly specific for MG and GG, and cannot use mannosylglyceramide (MGA), glucosylglycerol, mannosylglucosylglycerate (MGG), glucosylglucosylglycerate (GGG) or trehalose as substrates. The protein is Mannosylglycerate hydrolase of Thermus thermophilus (strain ATCC BAA-163 / DSM 7039 / HB27).